The chain runs to 514 residues: Maturase K (514 aa).

This sequence belongs to the intron maturase 2 family. MatK subfamily.

The protein localises to the plastid. Its subcellular location is the chloroplast. Usually encoded in the trnK tRNA gene intron. Probably assists in splicing its own and other chloroplast group II introns. This is Maturase K from Zamia integrifolia (Coontie).